The following is a 393-amino-acid chain: NAD(P)H-quinone oxidoreductase subunit H, chloroplastic (393 aa).

It belongs to the complex I 49 kDa subunit family. As to quaternary structure, NDH is composed of at least 16 different subunits, 5 of which are encoded in the nucleus.

The protein resides in the plastid. It is found in the chloroplast thylakoid membrane. It catalyses the reaction a plastoquinone + NADH + (n+1) H(+)(in) = a plastoquinol + NAD(+) + n H(+)(out). The catalysed reaction is a plastoquinone + NADPH + (n+1) H(+)(in) = a plastoquinol + NADP(+) + n H(+)(out). Functionally, NDH shuttles electrons from NAD(P)H:plastoquinone, via FMN and iron-sulfur (Fe-S) centers, to quinones in the photosynthetic chain and possibly in a chloroplast respiratory chain. The immediate electron acceptor for the enzyme in this species is believed to be plastoquinone. Couples the redox reaction to proton translocation, and thus conserves the redox energy in a proton gradient. The protein is NAD(P)H-quinone oxidoreductase subunit H, chloroplastic of Solanum lycopersicum (Tomato).